The following is a 25-amino-acid chain: Small ribosomal subunit protein eS32 (25 aa).

The disordered stretch occupies residues methionine 1–lysine 25.

It belongs to the eukaryotic ribosomal protein eS32 family. In terms of assembly, component of the small ribosomal subunit. Mature ribosomes consist of a small (40S) and a large (60S) subunit. The 40S subunit contains about 32 different proteins and 1 molecule of RNA (18S). The 60S subunit contains 45 different proteins and 3 molecules of RNA (25S, 5.8S and 5S).

The protein localises to the cytoplasm. Component of the ribosome, a large ribonucleoprotein complex responsible for the synthesis of proteins in the cell. The small ribosomal subunit (SSU) binds messenger RNAs (mRNAs) and translates the encoded message by selecting cognate aminoacyl-transfer RNA (tRNA) molecules. The large subunit (LSU) contains the ribosomal catalytic site termed the peptidyl transferase center (PTC), which catalyzes the formation of peptide bonds, thereby polymerizing the amino acids delivered by tRNAs into a polypeptide chain. The nascent polypeptides leave the ribosome through a tunnel in the LSU and interact with protein factors that function in enzymatic processing, targeting, and the membrane insertion of nascent chains at the exit of the ribosomal tunnel. This chain is Small ribosomal subunit protein eS32, found in Candida albicans (strain SC5314 / ATCC MYA-2876) (Yeast).